Reading from the N-terminus, the 248-residue chain is Aspartate/glutamate leucyltransferase (248 aa).

The protein belongs to the R-transferase family. Bpt subfamily.

The protein localises to the cytoplasm. The catalysed reaction is N-terminal L-glutamyl-[protein] + L-leucyl-tRNA(Leu) = N-terminal L-leucyl-L-glutamyl-[protein] + tRNA(Leu) + H(+). The enzyme catalyses N-terminal L-aspartyl-[protein] + L-leucyl-tRNA(Leu) = N-terminal L-leucyl-L-aspartyl-[protein] + tRNA(Leu) + H(+). Its function is as follows. Functions in the N-end rule pathway of protein degradation where it conjugates Leu from its aminoacyl-tRNA to the N-termini of proteins containing an N-terminal aspartate or glutamate. The sequence is that of Aspartate/glutamate leucyltransferase from Methylobacillus flagellatus (strain ATCC 51484 / DSM 6875 / VKM B-1610 / KT).